Here is a 423-residue protein sequence, read N- to C-terminus: uncharacterized protein (423 aa).

Residues 383-423 (ARGTTGGGGTRSGTSTDGQEDGRKPPVVVIREQPPPGNPPR) form a disordered region.

Belongs to the mycobacterial PPE family.

This is an uncharacterized protein from Mycobacterium tuberculosis (strain CDC 1551 / Oshkosh).